A 145-amino-acid polypeptide reads, in one-letter code: Large ribosomal subunit protein mL59 (145 aa).

Positions 123–135 (LKKTSKFKNERQK) are enriched in basic and acidic residues. Residues 123 to 145 (LKKTSKFKNERQKASKIAKPSPF) are disordered.

It belongs to the mitochondrion-specific ribosomal protein mL59 family. In terms of assembly, component of the mitochondrial large ribosomal subunit (mt-LSU). Mature yeast 74S mitochondrial ribosomes consist of a small (37S) and a large (54S) subunit. The 37S small subunit contains a 15S ribosomal RNA (15S mt-rRNA) and at least 32 different proteins. The 54S large subunit contains a 21S rRNA (21S mt-rRNA) and at least 45 different proteins.

It is found in the mitochondrion. Component of the mitochondrial ribosome (mitoribosome), a dedicated translation machinery responsible for the synthesis of mitochondrial genome-encoded proteins, including at least some of the essential transmembrane subunits of the mitochondrial respiratory chain. The mitoribosomes are attached to the mitochondrial inner membrane and translation products are cotranslationally integrated into the membrane. The protein is Large ribosomal subunit protein mL59 (mrpl25) of Schizosaccharomyces pombe (strain 972 / ATCC 24843) (Fission yeast).